Here is a 254-residue protein sequence, read N- to C-terminus: Phosphoglycerate mutase 1 (254 aa).

Residues 10 to 17 (RHGESAWN) and 23 to 24 (SG) contribute to the substrate site. H11 acts as the Tele-phosphohistidine intermediate in catalysis. 2 positions are modified to phosphoserine: S14 and S23. Y26 is modified (phosphotyrosine). S31 is modified (phosphoserine). Substrate contacts are provided by residues R62, 89–92 (ERHY), and K100. E89 (proton donor/acceptor) is an active-site residue. K106 bears the N6-acetyllysine mark. 116-117 (RR) is a substrate binding site. At S118 the chain carries Phosphoserine. Residue 187 to 188 (GN) participates in substrate binding. Position 251 is an N6-acetyllysine; alternate (K251). K251 carries the N6-succinyllysine; alternate modification. Residues K253 and K254 each carry the N6-acetyllysine modification.

The protein belongs to the phosphoglycerate mutase family. BPG-dependent PGAM subfamily. As to quaternary structure, homodimer. Acetylated at Lys-253, Lys-253 and Lys-254 under high glucose condition. Acetylation increases catalytic activity. Under glucose restriction SIRT1 levels dramatically increase and it deacetylates the enzyme.

The catalysed reaction is (2R)-2-phosphoglycerate = (2R)-3-phosphoglycerate. It catalyses the reaction (2R)-3-phospho-glyceroyl phosphate = (2R)-2,3-bisphosphoglycerate + H(+). Catalyzes the interconversion of 2-phosphoglycerate and 3-phosphoglyceratea crucial step in glycolysis, by using 2,3-bisphosphoglycerate. Also catalyzes the interconversion of (2R)-2,3-bisphosphoglycerate and (2R)-3-phospho-glyceroyl phosphate. The protein is Phosphoglycerate mutase 1 of Mus musculus (Mouse).